We begin with the raw amino-acid sequence, 80 residues long: UPF0248 protein YG5714_2801 (80 aa).

The protein belongs to the UPF0248 family.

The sequence is that of UPF0248 protein YG5714_2801 from Saccharolobus islandicus (strain Y.G.57.14 / Yellowstone #1) (Sulfolobus islandicus).